The following is a 442-amino-acid chain: NAD kinase 2, mitochondrial (442 aa).

A mitochondrion-targeting transit peptide spans 1-62 (MTCYRGFLLG…RELAGCGSRA (62 aa)). A compositionally biased stretch (low complexity) spans 24-36 (RGPGAGGPAARPR). Positions 24 to 60 (RGPGAGGPAARPRLGGDGGGRRHLGQGQPRELAGCGS) are disordered. K76 is subject to N6-acetyllysine; alternate. An N6-succinyllysine; alternate modification is found at K76. S188 carries the post-translational modification Phosphoserine. Residue K302 is modified to N6-succinyllysine. K317 carries the N6-acetyllysine; alternate modification. Residue K317 is modified to N6-succinyllysine; alternate. Phosphoserine is present on S367. Residue K397 is modified to N6-acetyllysine.

The protein belongs to the NAD kinase family. Homodimer. Widely expressed.

Its subcellular location is the mitochondrion. It catalyses the reaction NAD(+) + ATP = ADP + NADP(+) + H(+). With respect to regulation, inhibited by NADH, NADPH and NADP(+). Functionally, mitochondrial NAD(+) kinase that phosphorylates NAD(+) to yield NADP(+). Can use both ATP or inorganic polyphosphate as the phosphoryl donor. Also has weak NADH kinase activity in vitro; however NADH kinase activity is much weaker than the NAD(+) kinase activity and may not be relevant in vivo. This is NAD kinase 2, mitochondrial (NADK2) from Homo sapiens (Human).